A 431-amino-acid chain; its full sequence is Na(+)-translocating NADH-quinone reductase subunit F (431 aa).

A helical transmembrane segment spans residues 10–30 (IFVASAAFCSLGLILVAVILL). Residues 41-133 (CKLKINNDDS…DLCLEVEERY (93 aa)) form the 2Fe-2S ferredoxin-type domain. Residues C76, C82, C85, and C117 each contribute to the [2Fe-2S] cluster site. Residues 136–286 (ASSWEGTVVS…SGPYGESFMK (151 aa)) form the FAD-binding FR-type domain. The catalytic stretch occupies residues 289 to 413 (NRPVIFLIGG…ALHNSSILTL (125 aa)).

The protein belongs to the NqrF family. As to quaternary structure, composed of six subunits; NqrA, NqrB, NqrC, NqrD, NqrE and NqrF. Requires [2Fe-2S] cluster as cofactor. FAD serves as cofactor.

The protein resides in the cell inner membrane. The catalysed reaction is a ubiquinone + n Na(+)(in) + NADH + H(+) = a ubiquinol + n Na(+)(out) + NAD(+). Its function is as follows. NQR complex catalyzes the reduction of ubiquinone-1 to ubiquinol by two successive reactions, coupled with the transport of Na(+) ions from the cytoplasm to the periplasm. The first step is catalyzed by NqrF, which accepts electrons from NADH and reduces ubiquinone-1 to ubisemiquinone by a one-electron transfer pathway. The polypeptide is Na(+)-translocating NADH-quinone reductase subunit F (Chlamydia trachomatis serovar D (strain ATCC VR-885 / DSM 19411 / UW-3/Cx)).